The chain runs to 162 residues: Allophycocyanin alpha-B chain (162 aa).

Position 71 is an N4-methylasparagine (N71). C81 provides a ligand contact to (2R,3E)-phycocyanobilin.

It belongs to the phycobiliprotein family. Contains one covalently linked phycocyanobilin chromophore.

The protein localises to the plastid. It is found in the cyanelle thylakoid membrane. In terms of biological role, allophycocyanin is a photosynthetic bile pigment-protein complex with maximum absorption at approximately 650 nanometers. This is Allophycocyanin alpha-B chain (apcD) from Cyanophora paradoxa.